Reading from the N-terminus, the 368-residue chain is Glutamate 5-kinase (368 aa).

K9 contributes to the ATP binding site. Positions 49, 136, and 148 each coordinate substrate. ATP contacts are provided by residues 168–169 (TD) and 210–216 (TGGMMTK). Residues 275–353 (AGIITIDNGA…ADIENVLGYE (79 aa)) enclose the PUA domain.

This sequence belongs to the glutamate 5-kinase family.

The protein resides in the cytoplasm. It carries out the reaction L-glutamate + ATP = L-glutamyl 5-phosphate + ADP. It functions in the pathway amino-acid biosynthesis; L-proline biosynthesis; L-glutamate 5-semialdehyde from L-glutamate: step 1/2. In terms of biological role, catalyzes the transfer of a phosphate group to glutamate to form L-glutamate 5-phosphate. This is Glutamate 5-kinase from Haemophilus influenzae (strain PittGG).